A 235-amino-acid polypeptide reads, in one-letter code: UPF0758 protein Swol_1642 (235 aa).

Residues 109–235 enclose the MPN domain; it reads IIKSPEDVQE…YCSLKARGLI (127 aa). Zn(2+) is bound by residues His-184, His-186, and Asp-197. Residues 184–197 carry the JAMM motif motif; the sequence is HNHPSGDPTPSQED.

Belongs to the UPF0758 family.

The protein is UPF0758 protein Swol_1642 of Syntrophomonas wolfei subsp. wolfei (strain DSM 2245B / Goettingen).